Consider the following 631-residue polypeptide: 1,4-alpha-glucan branching enzyme GlgB (631 aa).

The active-site Nucleophile is the Asp309. Catalysis depends on Glu362, which acts as the Proton donor.

This sequence belongs to the glycosyl hydrolase 13 family. GlgB subfamily. In terms of assembly, monomer.

It carries out the reaction Transfers a segment of a (1-&gt;4)-alpha-D-glucan chain to a primary hydroxy group in a similar glucan chain.. The protein operates within glycan biosynthesis; glycogen biosynthesis. Its function is as follows. Catalyzes the formation of the alpha-1,6-glucosidic linkages in glycogen by scission of a 1,4-alpha-linked oligosaccharide from growing alpha-1,4-glucan chains and the subsequent attachment of the oligosaccharide to the alpha-1,6 position. This is 1,4-alpha-glucan branching enzyme GlgB from Marinobacter nauticus (strain ATCC 700491 / DSM 11845 / VT8) (Marinobacter aquaeolei).